A 396-amino-acid chain; its full sequence is S-adenosylmethionine synthase 2 (396 aa).

Glu13 is a Mg(2+) binding site. His19 contributes to the ATP binding site. A K(+)-binding site is contributed by Glu47. Positions 60 and 103 each coordinate L-methionine. ATP contacts are provided by residues 171-173 (DGK), 239-242 (SGRF), Asp250, 256-257 (RK), Ala273, Lys277, and Lys281. Asp250 serves as a coordination point for L-methionine. Lys281 provides a ligand contact to L-methionine.

It belongs to the AdoMet synthase family. As to quaternary structure, homotetramer. It depends on Mn(2+) as a cofactor. The cofactor is Mg(2+). Requires Co(2+) as cofactor. K(+) is required as a cofactor.

The protein resides in the cytoplasm. It carries out the reaction L-methionine + ATP + H2O = S-adenosyl-L-methionine + phosphate + diphosphate. Its pathway is amino-acid biosynthesis; S-adenosyl-L-methionine biosynthesis; S-adenosyl-L-methionine from L-methionine: step 1/1. In terms of biological role, catalyzes the formation of S-adenosylmethionine from methionine and ATP. The reaction comprises two steps that are both catalyzed by the same enzyme: formation of S-adenosylmethionine (AdoMet) and triphosphate, and subsequent hydrolysis of the triphosphate. In Dianthus caryophyllus (Carnation), this protein is S-adenosylmethionine synthase 2 (SAM2).